Reading from the N-terminus, the 940-residue chain is Receptor-like protein 9b (940 aa).

The signal sequence occupies residues 1 to 28 (MLMMFSPAFVMVMDLMVLVMMIMMMVSS). Topologically, residues 29-895 (LDAHGHISCI…GDEETTIDME (867 aa)) are extracellular. N-linked (GlcNAc...) asparagine glycosylation is found at Asn53, Asn63, Asn66, Asn101, Asn115, and Asn151. LRR repeat units lie at residues 108 to 136 (FGELQTLNLSNFWCQGWFDHIHGYKSFER), 137 to 163 (LKNLEILDISENGVNNTVLPFINTASS), 165 to 185 (KTLILHGNNMEGTFPMKELIN), 186 to 211 (LRNLELLDLSKNQFVGPVPDLANFHN), 213 to 232 (QGLDMSDNKFSGSNKGLCQL), 233 to 255 (KNLRELDLSQNKFTGQFPQCFDS), 257 to 279 (TQLQVLDISSNNFNGTVPSLIRN), 281 to 304 (DSVEYLALSDNEFKGFFSLELIAN), 306 to 330 (SKLKVFKLSSRSNLLRLKKLSSLQP), 331 to 354 (KFQLSVIELQNCNLENVPSFIQHQ), 355 to 378 (KDLHVINLSNNKLTGVFPYWLLEK), 379 to 402 (YPNLRVLLLQNNSLTMLELPRLLN), 403 to 426 (HTLQILDLSANNFDQRLPENIGKV), 427 to 450 (LPNIRHLNLSNNGFQWILPSSFGE), 452 to 475 (KDIKFLDLSHNNFSGSLPMKFLIG), and 477 to 502 (SSLHTLKLSYNKFFGQIFPKQTNFGS). 2 N-linked (GlcNAc...) asparagine glycosylation sites follow: Asn270 and Asn304. Asn361, Asn389, and Asn402 each carry an N-linked (GlcNAc...) asparagine glycan. N-linked (GlcNAc...) asparagine glycosylation is found at Asn434 and Asn463. An LRR 17; degenerate repeat occupies 503-522 (LVVLIANNNLFTGIADGLRN). 11 LRR repeats span residues 523–546 (VQSLGVLDLSNNYLQGVIPSWFGG), 547–570 (FFFAYLFLSNNLLEGTLPSTLFSK), 571–593 (PTFKILDLSGNKFSGNLPSHFTG), 595–615 (DMSLLYLNDNEFSGTIPSTLI), 616–639 (KDVLVLDLRNNKLSGTIPHFVKNE), 641–662 (ILSLLLRGNTLTGHIPTDLCGL), 663–686 (RSIRILDLANNRLKGSIPTCLNNV), 752–776 (FNFMFGLDLSSNELSGDIPKELGDL), 777–799 (QRIRALNLSHNSLSGLIPQSFSN), 801–824 (TDIESIDLSFNLLRGPIPQDLSKL), and 826–849 (YMVVFNVSYNNLSGSIPSHGKFST). Asn685 carries an N-linked (GlcNAc...) asparagine glycan. Residues Asn783 and Asn799 are each glycosylated (N-linked (GlcNAc...) asparagine). N-linked (GlcNAc...) asparagine glycans are attached at residues Asn831, Asn836, Asn867, and Asn873. Residues 896-916 (IFYWSLAATYGVTWITFIVFL) form a helical membrane-spanning segment. Residues 917-940 (CFDSPWRRVWFHFVDAFISLFKCV) lie on the Cytoplasmic side of the membrane.

This sequence belongs to the RLP family.

It is found in the cell membrane. The sequence is that of Receptor-like protein 9b from Arabidopsis thaliana (Mouse-ear cress).